Here is a 505-residue protein sequence, read N- to C-terminus: AMP phosphorylase (505 aa).

Residues Gly170, 196-201, and Thr205 contribute to the AMP site; that span reads SRAITS. The active-site Proton donor is the Asp258. Residues Ser266 and Lys290 each coordinate AMP.

The protein belongs to the thymidine/pyrimidine-nucleoside phosphorylase family. Type 2 subfamily.

The enzyme catalyses AMP + phosphate = alpha-D-ribose 1,5-bisphosphate + adenine. It catalyses the reaction CMP + phosphate = cytosine + alpha-D-ribose 1,5-bisphosphate. The catalysed reaction is UMP + phosphate = alpha-D-ribose 1,5-bisphosphate + uracil. In terms of biological role, catalyzes the conversion of AMP and phosphate to adenine and ribose 1,5-bisphosphate (R15P). Exhibits phosphorylase activity toward CMP and UMP in addition to AMP. Functions in an archaeal AMP degradation pathway, together with R15P isomerase and RubisCO. The chain is AMP phosphorylase from Methanococcus maripaludis (strain DSM 14266 / JCM 13030 / NBRC 101832 / S2 / LL).